The chain runs to 148 residues: Snaclec B3/B5 (148 aa).

The first 24 residues, 1–24, serve as a signal peptide directing secretion; that stretch reads MGRFIFVSFGLLVVFLSLSGTGAA. 3 disulfides stabilise this stretch: Cys27/Cys38, Cys55/Cys144, and Cys121/Cys136. The C-type lectin domain maps to 34 to 145; the sequence is YDQHCYKVFD…CRLLGHFVCK (112 aa).

Belongs to the snaclec family. As to quaternary structure, heterodimer; disulfide-linked. As to expression, expressed by the venom gland.

It localises to the secreted. In terms of biological role, interferes with one step of hemostasis (modulation of platelet aggregation, or coagulation cascade, for example). This chain is Snaclec B3/B5, found in Macrovipera lebetinus (Levantine viper).